A 565-amino-acid polypeptide reads, in one-letter code: NAD-dependent malic enzyme (565 aa).

Tyr104 serves as the catalytic Proton donor. Position 157 (Arg157) interacts with NAD(+). Lys175 (proton acceptor) is an active-site residue. Residues Glu246, Asp247, and Asp270 each contribute to the a divalent metal cation site. Residues Asp270 and Asn418 each coordinate NAD(+).

This sequence belongs to the malic enzymes family. Homotetramer. The cofactor is Mg(2+). Requires Mn(2+) as cofactor.

The enzyme catalyses (S)-malate + NAD(+) = pyruvate + CO2 + NADH. The catalysed reaction is oxaloacetate + H(+) = pyruvate + CO2. The sequence is that of NAD-dependent malic enzyme from Escherichia coli O139:H28 (strain E24377A / ETEC).